The primary structure comprises 577 residues: Chaperonin CPN60, mitochondrial (577 aa).

A mitochondrion-targeting transit peptide spans 1 to 31; sequence MYRFASNLASKARIAQNARQVSSRMSWSRNY. At Ser-151 the chain carries Phosphoserine.

The protein belongs to the chaperonin (HSP60) family.

The protein localises to the mitochondrion. Implicated in mitochondrial protein import and macromolecular assembly. May facilitate the correct folding of imported proteins. May also prevent misfolding and promote the refolding and proper assembly of unfolded polypeptides generated under stress conditions in the mitochondrial matrix. This is Chaperonin CPN60, mitochondrial (CPN60) from Arabidopsis thaliana (Mouse-ear cress).